Consider the following 690-residue polypeptide: Protein arginine N-methyltransferase 7 (690 aa).

2 SAM-dependent MTase PRMT-type domains span residues 14–357 and 366–690; these read QNSW…YSLW and TKSV…QKKL.

This sequence belongs to the class I-like SAM-binding methyltransferase superfamily. Protein arginine N-methyltransferase family. PRMT7 subfamily. As to expression, expressed at low level in ovary.

Its function is as follows. Essential arginine methyltransferase that can both catalyze the formation of omega-N monomethylarginine (MMA) and symmetrical dimethylarginine (sDMA). Specifically mediates the symmetrical dimethylation of arginine residues in the small nuclear ribonucleoproteins SmD1 and SmD3. The sequence is that of Protein arginine N-methyltransferase 7 (Art7) from Drosophila melanogaster (Fruit fly).